The sequence spans 466 residues: 3-isopropylmalate dehydratase large subunit (466 aa).

3 residues coordinate [4Fe-4S] cluster: Cys-347, Cys-407, and Cys-410.

The protein belongs to the aconitase/IPM isomerase family. LeuC type 1 subfamily. As to quaternary structure, heterodimer of LeuC and LeuD. The cofactor is [4Fe-4S] cluster.

The catalysed reaction is (2R,3S)-3-isopropylmalate = (2S)-2-isopropylmalate. Its pathway is amino-acid biosynthesis; L-leucine biosynthesis; L-leucine from 3-methyl-2-oxobutanoate: step 2/4. Its function is as follows. Catalyzes the isomerization between 2-isopropylmalate and 3-isopropylmalate, via the formation of 2-isopropylmaleate. This chain is 3-isopropylmalate dehydratase large subunit, found in Shigella dysenteriae serotype 1 (strain Sd197).